The primary structure comprises 264 residues: tRNA (guanine-N(1)-)-methyltransferase (264 aa).

S-adenosyl-L-methionine-binding positions include glycine 125 and 145–150 (LGDFVL).

The protein belongs to the RNA methyltransferase TrmD family. Homodimer.

The protein resides in the cytoplasm. It catalyses the reaction guanosine(37) in tRNA + S-adenosyl-L-methionine = N(1)-methylguanosine(37) in tRNA + S-adenosyl-L-homocysteine + H(+). Functionally, specifically methylates guanosine-37 in various tRNAs. This is tRNA (guanine-N(1)-)-methyltransferase from Burkholderia mallei (strain NCTC 10247).